We begin with the raw amino-acid sequence, 476 residues long: Arginine biosynthesis bifunctional protein ArgJ, mitochondrial (476 aa).

Positions 204, 233, 244, 331, 471, and 476 each coordinate substrate. Threonine 244 functions as the Nucleophile in the catalytic mechanism.

The protein belongs to the ArgJ family. In terms of assembly, heterodimer of an alpha and a beta chain. Post-translationally, the alpha and beta chains are autoproteolytically processed from a single precursor protein within the mitochondrion.

Its subcellular location is the mitochondrion matrix. It catalyses the reaction N(2)-acetyl-L-ornithine + L-glutamate = N-acetyl-L-glutamate + L-ornithine. The catalysed reaction is L-glutamate + acetyl-CoA = N-acetyl-L-glutamate + CoA + H(+). Its pathway is amino-acid biosynthesis; L-arginine biosynthesis; L-ornithine and N-acetyl-L-glutamate from L-glutamate and N(2)-acetyl-L-ornithine (cyclic): step 1/1. It participates in amino-acid biosynthesis; L-arginine biosynthesis; N(2)-acetyl-L-ornithine from L-glutamate: step 1/4. In terms of biological role, catalyzes two activities which are involved in the cyclic version of arginine biosynthesis: the synthesis of acetylglutamate from glutamate and acetyl-CoA, and of ornithine by transacetylation between acetylornithine and glutamate. The sequence is that of Arginine biosynthesis bifunctional protein ArgJ, mitochondrial from Arthroderma otae (strain ATCC MYA-4605 / CBS 113480) (Microsporum canis).